We begin with the raw amino-acid sequence, 874 residues long: Mitochondrial escape protein 2 (874 aa).

The N-terminal 55 residues, 1-55 (MIRTFATIANRGPGIRLATLAASRNLGYSSGGRISSVRIEKLRFSPFRSSTSLRY), are a transit peptide targeting the mitochondrion. The Mitochondrial matrix segment spans residues 56–313 (TSDIQHVMQE…ITDFIGNHQR (258 aa)). An RRM domain is found at 224–297 (VKLSVKFEGE…NTVVHIQYLP (74 aa)). A helical transmembrane segment spans residues 314–334 (IAIPIILALLATAAVFIFDPI). Residues 335–874 (REWFIMQNVS…GLSSKKSSWF (540 aa)) lie on the Mitochondrial intermembrane side of the membrane. The segment at 547–566 (RRRQQGDSTSEDILSEDEYL) is disordered. Residues 555–565 (TSEDILSEDEY) are compositionally biased toward acidic residues.

It belongs to the YME2 family.

It is found in the mitochondrion inner membrane. In terms of biological role, plays a role in maintaining the mitochondrial genome and in controlling the mtDNA escape. Involved in the regulation of mtDNA nucleotide structure and number. May have a dispensable role in early maturation of pre-rRNA. The polypeptide is Mitochondrial escape protein 2 (YME2) (Meyerozyma guilliermondii (strain ATCC 6260 / CBS 566 / DSM 6381 / JCM 1539 / NBRC 10279 / NRRL Y-324) (Yeast)).